Reading from the N-terminus, the 242-residue chain is Agamous-like MADS-box protein MADS4 (242 aa).

Positions 1–61 constitute an MADS-box domain; the sequence is MGRGRVELKR…GKLYEFCSSS (61 aa). The region spanning 89–185 is the K-box domain; the sequence is ELSSQQEYLK…GTQVNQLQWN (97 aa).

As to expression, expressed in flowers and seeds.

It localises to the nucleus. Its function is as follows. Probable transcription factor involved in flower development. The protein is Agamous-like MADS-box protein MADS4 of Vitis vinifera (Grape).